We begin with the raw amino-acid sequence, 809 residues long: Putative zinc metalloprotease TRE2 (809 aa).

2 stretches are compositionally biased toward polar residues: residues 1–12 (MRSSYQPVSTTN) and 20–30 (PTASSSHNLLM). A disordered region spans residues 1–66 (MRSSYQPVST…PSYEFDIEDP (66 aa)). The Cytoplasmic portion of the chain corresponds to 1-125 (MRSSYQPVST…KIGNPFILRR (125 aa)). The segment covering 37 to 50 (SPPSSNDNSIETNI) has biased composition (low complexity). A helical; Signal-anchor for type II membrane protein transmembrane segment spans residues 126 to 146 (FFYIIFMSFIAYYVLSSGYLF). The Extracellular segment spans residues 147–809 (NEKASGSKGM…VEETNDIGYK (663 aa)). Asn-228 carries N-linked (GlcNAc...) asparagine glycosylation. Residues 255–349 (SNGKLSKVSL…STGDASGLNW (95 aa)) form the PA domain. 2 N-linked (GlcNAc...) asparagine glycosylation sites follow: Asn-669 and Asn-736.

It belongs to the peptidase M28 family. M28B subfamily.

It is found in the membrane. The chain is Putative zinc metalloprotease TRE2 (TRE2) from Saccharomyces cerevisiae (strain ATCC 204508 / S288c) (Baker's yeast).